We begin with the raw amino-acid sequence, 315 residues long: Ribosomal protein L11 methyltransferase (315 aa).

Residues T162, G183, D205, and N248 each coordinate S-adenosyl-L-methionine.

This sequence belongs to the methyltransferase superfamily. PrmA family.

It is found in the cytoplasm. The catalysed reaction is L-lysyl-[protein] + 3 S-adenosyl-L-methionine = N(6),N(6),N(6)-trimethyl-L-lysyl-[protein] + 3 S-adenosyl-L-homocysteine + 3 H(+). In terms of biological role, methylates ribosomal protein L11. In Enterococcus faecalis (strain ATCC 700802 / V583), this protein is Ribosomal protein L11 methyltransferase.